The following is a 218-amino-acid chain: Small ribosomal subunit protein uS3 (218 aa).

Positions 39–107 constitute a KH type-2 domain; the sequence is IRDYIKSKLL…QISINIVEIK (69 aa).

The protein belongs to the universal ribosomal protein uS3 family. Part of the 30S ribosomal subunit. Forms a tight complex with proteins S10 and S14.

Functionally, binds the lower part of the 30S subunit head. Binds mRNA in the 70S ribosome, positioning it for translation. This chain is Small ribosomal subunit protein uS3, found in Desulforudis audaxviator (strain MP104C).